The chain runs to 861 residues: Leucine--tRNA ligase (861 aa).

Residues 42 to 52 (PYPSGRLHMGH) carry the 'HIGH' region motif. The 'KMSKS' region motif lies at 619 to 623 (KMSKS). Residue Lys622 participates in ATP binding.

Belongs to the class-I aminoacyl-tRNA synthetase family.

It is found in the cytoplasm. It catalyses the reaction tRNA(Leu) + L-leucine + ATP = L-leucyl-tRNA(Leu) + AMP + diphosphate. This chain is Leucine--tRNA ligase, found in Haemophilus influenzae (strain PittGG).